The sequence spans 129 residues: Follitropin subunit beta (129 aa).

Residues M1–S20 form the signal peptide. 6 disulfide bridges follow: C21–C69, C35–C84, C38–C122, C46–C100, C50–C102, and C105–C112. N-linked (GlcNAc...) asparagine glycans are attached at residues N25 and N42.

This sequence belongs to the glycoprotein hormones subunit beta family. Heterodimer. The active follitropin is a heterodimer composed of an alpha chain/CGA shared with other hormones and a unique beta chain/FSHB shown here.

Its subcellular location is the secreted. Together with the alpha chain CGA constitutes follitropin, the follicle-stimulating hormone, and provides its biological specificity to the hormone heterodimer. Binds FSHR, a G protein-coupled receptor, on target cells to activate downstream signaling pathways. Follitropin is involved in follicle development and spermatogenesis in reproductive organs. This Saimiri boliviensis boliviensis (Bolivian squirrel monkey) protein is Follitropin subunit beta (FSHB).